The following is a 316-amino-acid chain: Ribosomal protein L11 methyltransferase (316 aa).

Residues Thr157, Gly178, Asp200, and Asn243 each coordinate S-adenosyl-L-methionine.

This sequence belongs to the methyltransferase superfamily. PrmA family.

The protein localises to the cytoplasm. The catalysed reaction is L-lysyl-[protein] + 3 S-adenosyl-L-methionine = N(6),N(6),N(6)-trimethyl-L-lysyl-[protein] + 3 S-adenosyl-L-homocysteine + 3 H(+). Functionally, methylates ribosomal protein L11. This chain is Ribosomal protein L11 methyltransferase, found in Streptococcus pneumoniae (strain JJA).